Here is a 218-residue protein sequence, read N- to C-terminus: 1-Cys peroxiredoxin PER1 (218 aa).

Residues 4 to 164 (LTIGDTVPNL…VVRAVDSLLT (161 aa)) enclose the Thioredoxin domain. Cys-46 functions as the Cysteine sulfenic acid (-SOH) intermediate in the catalytic mechanism. Residues 194-217 (KKMFPQGFETADLPSKKGYLRFTK) carry the Bipartite nuclear localization signal motif.

Belongs to the peroxiredoxin family. Prx6 subfamily. Embryo and aleurone cells.

It is found in the nucleus. Its subcellular location is the cytoplasm. It carries out the reaction a hydroperoxide + [thioredoxin]-dithiol = an alcohol + [thioredoxin]-disulfide + H2O. Thiol-specific peroxidase that catalyzes the reduction of hydrogen peroxide and organic hydroperoxides to water and alcohols, respectively. Seems to contribute to the inhibition of germination during stress. The chain is 1-Cys peroxiredoxin PER1 (PER1) from Hordeum vulgare (Barley).